A 196-amino-acid polypeptide reads, in one-letter code: ATP-dependent Clp protease proteolytic subunit (196 aa).

S101 serves as the catalytic Nucleophile. H126 is a catalytic residue.

It belongs to the peptidase S14 family. As to quaternary structure, component of the chloroplastic Clp protease core complex.

The protein localises to the plastid. The protein resides in the chloroplast stroma. It carries out the reaction Hydrolysis of proteins to small peptides in the presence of ATP and magnesium. alpha-casein is the usual test substrate. In the absence of ATP, only oligopeptides shorter than five residues are hydrolyzed (such as succinyl-Leu-Tyr-|-NHMec, and Leu-Tyr-Leu-|-Tyr-Trp, in which cleavage of the -Tyr-|-Leu- and -Tyr-|-Trp bonds also occurs).. Functionally, cleaves peptides in various proteins in a process that requires ATP hydrolysis. Has a chymotrypsin-like activity. Plays a major role in the degradation of misfolded proteins. This Barbarea verna (Land cress) protein is ATP-dependent Clp protease proteolytic subunit.